We begin with the raw amino-acid sequence, 186 residues long: Dynactin subunit 3 (186 aa).

A2 carries the post-translational modification N-acetylalanine. Residues 135 to 157 (QQQDQCVEITEESKALLEEYNKT) are a coiled coil.

This sequence belongs to the dynactin subunit 3 family. In terms of assembly, subunit of dynactin, a multiprotein complex part of a tripartite complex with dynein and a adapter, such as BICDL1, BICD2 or HOOK3. The dynactin complex is built around ACTR1A/ACTB filament and consists of an actin-related filament composed of a shoulder domain, a pointed end and a barbed end. Its length is defined by its flexible shoulder domain. The soulder is composed of 2 DCTN1 subunits, 4 DCTN2 and 2 DCTN3. The 4 DCNT2 (via N-terminus) bind the ACTR1A filament and act as molecular rulers to determine the length. The pointed end is important for binding dynein-dynactin cargo adapters. Consists of 4 subunits: ACTR10, DCNT4, DCTN5 and DCTN6. The barbed end is composed of a CAPZA1:CAPZB heterodimers, which binds ACTR1A/ACTB filament and dynactin and stabilizes dynactin.

The protein localises to the cytoplasm. Its subcellular location is the cytoskeleton. The protein resides in the microtubule organizing center. It is found in the centrosome. It localises to the chromosome. The protein localises to the centromere. Its subcellular location is the kinetochore. The protein resides in the spindle. It is found in the cleavage furrow. It localises to the midbody. Part of the dynactin complex that activates the molecular motor dynein for ultra-processive transport along microtubules. Together with dynein may be involved in spindle assembly and cytokinesis. The protein is Dynactin subunit 3 (DCTN3) of Bos taurus (Bovine).